The sequence spans 362 residues: Peptide chain release factor 1 (362 aa).

The residue at position 235 (glutamine 235) is an N5-methylglutamine.

Belongs to the prokaryotic/mitochondrial release factor family. Post-translationally, methylated by PrmC. Methylation increases the termination efficiency of RF1.

It is found in the cytoplasm. Its function is as follows. Peptide chain release factor 1 directs the termination of translation in response to the peptide chain termination codons UAG and UAA. This chain is Peptide chain release factor 1, found in Acinetobacter baylyi (strain ATCC 33305 / BD413 / ADP1).